Reading from the N-terminus, the 1130-residue chain is Alpha-mannosidase 2 (1130 aa).

The Cytoplasmic segment spans residues 1–14 (MRTRVLRCRPFSTR). The chain crosses the membrane as a helical; Signal-anchor for type II membrane protein span at residues 15–35 (ILLLLLFVLAFGVYCYFYNAS). Topologically, residues 36-1130 (PQNYNKPRIS…MEVKTYKIRF (1095 aa)) are lumenal. Asparagine 117 is a glycosylation site (N-linked (GlcNAc...) asparagine). The Zn(2+) site is built by histidine 133 and aspartate 135. The N-linked (GlcNAc...) asparagine glycan is linked to asparagine 166. 2 residues coordinate Zn(2+): aspartate 247 and histidine 527. Aspartate 247 functions as the Nucleophile in the catalytic mechanism. N-linked (GlcNAc...) asparagine glycans are attached at residues asparagine 622, asparagine 683, asparagine 1056, and asparagine 1095.

This sequence belongs to the glycosyl hydrolase 38 family. In terms of assembly, homodimer; disulfide-linked. It depends on Zn(2+) as a cofactor. N-glycosylated.

Its subcellular location is the microsome membrane. It is found in the golgi apparatus membrane. It carries out the reaction N(4)-{beta-D-GlcNAc-(1-&gt;2)-alpha-D-Man-(1-&gt;3)-[alpha-D-Man-(1-&gt;3)-[alpha-D-Man-(1-&gt;6)]-alpha-D-Man-(1-&gt;6)]-beta-D-Man-(1-&gt;4)-beta-D-GlcNAc-(1-&gt;4)-beta-D-GlcNAc}-L-asparaginyl-[protein] + 2 H2O = 2 alpha-D-mannopyranose + an N(4)-{beta-D-GlcNAc-(1-&gt;2)-alpha-D-Man-(1-&gt;3)-[alpha-D-Man-(1-&gt;6)]-beta-D-Man-(1-&gt;4)-beta-D-GlcNAc-(1-&gt;4)-beta-D-GlcNAc}-L-asparaginyl-[protein]. The protein operates within protein modification; protein glycosylation. With respect to regulation, inhibited by swainsonine. Catalyzes the first committed step in the biosynthesis of complex N-glycans. It controls conversion of high mannose to complex N-glycans; the final hydrolytic step in the N-glycan maturation pathway. The protein is Alpha-mannosidase 2 of Spodoptera frugiperda (Fall armyworm).